Reading from the N-terminus, the 262-residue chain is Acyl-[acyl-carrier-protein]--UDP-N-acetylglucosamine O-acyltransferase (262 aa).

Belongs to the transferase hexapeptide repeat family. LpxA subfamily. Homotrimer.

The protein localises to the cytoplasm. It catalyses the reaction a (3R)-hydroxyacyl-[ACP] + UDP-N-acetyl-alpha-D-glucosamine = a UDP-3-O-[(3R)-3-hydroxyacyl]-N-acetyl-alpha-D-glucosamine + holo-[ACP]. The protein operates within glycolipid biosynthesis; lipid IV(A) biosynthesis; lipid IV(A) from (3R)-3-hydroxytetradecanoyl-[acyl-carrier-protein] and UDP-N-acetyl-alpha-D-glucosamine: step 1/6. Functionally, involved in the biosynthesis of lipid A, a phosphorylated glycolipid that anchors the lipopolysaccharide to the outer membrane of the cell. In Herminiimonas arsenicoxydans, this protein is Acyl-[acyl-carrier-protein]--UDP-N-acetylglucosamine O-acyltransferase.